Reading from the N-terminus, the 178-residue chain is Large ribosomal subunit protein uL5 (178 aa).

Belongs to the universal ribosomal protein uL5 family. In terms of assembly, part of the 50S ribosomal subunit; part of the 5S rRNA/L5/L18/L25 subcomplex. Contacts the 5S rRNA and the P site tRNA. Forms a bridge to the 30S subunit in the 70S ribosome.

In terms of biological role, this is one of the proteins that bind and probably mediate the attachment of the 5S RNA into the large ribosomal subunit, where it forms part of the central protuberance. In the 70S ribosome it contacts protein S13 of the 30S subunit (bridge B1b), connecting the 2 subunits; this bridge is implicated in subunit movement. Contacts the P site tRNA; the 5S rRNA and some of its associated proteins might help stabilize positioning of ribosome-bound tRNAs. This Psychrobacter cryohalolentis (strain ATCC BAA-1226 / DSM 17306 / VKM B-2378 / K5) protein is Large ribosomal subunit protein uL5.